The primary structure comprises 123 residues: Large ribosomal subunit protein bL19 (123 aa).

The protein belongs to the bacterial ribosomal protein bL19 family.

In terms of biological role, this protein is located at the 30S-50S ribosomal subunit interface and may play a role in the structure and function of the aminoacyl-tRNA binding site. The chain is Large ribosomal subunit protein bL19 from Ruegeria sp. (strain TM1040) (Silicibacter sp.).